Consider the following 327-residue polypeptide: Delta(3,5)-Delta(2,4)-dienoyl-CoA isomerase, mitochondrial (327 aa).

A mitochondrion-targeting transit peptide spans 1–33; it reads MATAMTVSSKLLGLLMQQLRGTRQLYFNVSLRS. Residues 115 to 119 and glycine 173 contribute to the substrate site; that span reads SGIDL. At lysine 230 the chain carries N6-succinyllysine. Serine 267 is subject to Phosphoserine. At lysine 316 the chain carries N6-succinyllysine. The Microbody targeting signal signature appears at 325–327; sequence SKL. Lysine 326 carries the post-translational modification N6-acetyllysine.

It belongs to the enoyl-CoA hydratase/isomerase family. In terms of assembly, homohexamer. Expressed in heart and liver (at protein level).

The protein localises to the mitochondrion. Its subcellular location is the peroxisome. The catalysed reaction is (3E,5Z)-octadienoyl-CoA = (2E,4E)-octadienoyl-CoA. The enzyme catalyses (3E,5Z,8Z,11Z,14Z)-eicosapentaenoyl-CoA = (2E,4E,8Z,11Z,14Z)-eicosapentaenoyl-CoA. Its pathway is lipid metabolism; fatty acid beta-oxidation. In terms of biological role, isomerization of 3-trans,5-cis-dienoyl-CoA to 2-trans,4-trans-dienoyl-CoA. This is Delta(3,5)-Delta(2,4)-dienoyl-CoA isomerase, mitochondrial from Rattus norvegicus (Rat).